A 515-amino-acid chain; its full sequence is Bifunctional purine biosynthesis protein PurH (515 aa).

Residues 1–145 form the MGS-like domain; that stretch reads MTKRALISVS…KNHASVTVVV (145 aa).

This sequence belongs to the PurH family.

The catalysed reaction is (6R)-10-formyltetrahydrofolate + 5-amino-1-(5-phospho-beta-D-ribosyl)imidazole-4-carboxamide = 5-formamido-1-(5-phospho-D-ribosyl)imidazole-4-carboxamide + (6S)-5,6,7,8-tetrahydrofolate. It catalyses the reaction IMP + H2O = 5-formamido-1-(5-phospho-D-ribosyl)imidazole-4-carboxamide. Its pathway is purine metabolism; IMP biosynthesis via de novo pathway; 5-formamido-1-(5-phospho-D-ribosyl)imidazole-4-carboxamide from 5-amino-1-(5-phospho-D-ribosyl)imidazole-4-carboxamide (10-formyl THF route): step 1/1. It participates in purine metabolism; IMP biosynthesis via de novo pathway; IMP from 5-formamido-1-(5-phospho-D-ribosyl)imidazole-4-carboxamide: step 1/1. This Streptococcus pyogenes serotype M18 (strain MGAS8232) protein is Bifunctional purine biosynthesis protein PurH.